The primary structure comprises 300 residues: GTPase Era (300 aa).

In terms of domain architecture, Era-type G spans 8-176 (RCGYVAIVGR…ERLVAGRLPQ (169 aa)). Positions 16 to 23 (GRPNVGKS) are G1. 16 to 23 (GRPNVGKS) contacts GTP. The segment at 42–46 (QTTRH) is G2. Residues 63-66 (DTPG) form a G3 region. GTP is bound by residues 63–67 (DTPGL) and 125–128 (NKAD). The tract at residues 125-128 (NKAD) is G4. The tract at residues 155 to 157 (ISA) is G5. The region spanning 199-283 (VREKIMRQLG…MLNLWVKVKG (85 aa)) is the KH type-2 domain.

The protein belongs to the TRAFAC class TrmE-Era-EngA-EngB-Septin-like GTPase superfamily. Era GTPase family. As to quaternary structure, monomer.

The protein resides in the cytoplasm. It is found in the cell inner membrane. Functionally, an essential GTPase that binds both GDP and GTP, with rapid nucleotide exchange. Plays a role in 16S rRNA processing and 30S ribosomal subunit biogenesis and possibly also in cell cycle regulation and energy metabolism. This chain is GTPase Era, found in Azotobacter vinelandii (strain DJ / ATCC BAA-1303).